Consider the following 99-residue polypeptide: Malonate decarboxylase acyl carrier protein (99 aa).

Serine 25 carries the O-(phosphoribosyl dephospho-coenzyme A)serine modification.

It belongs to the MdcC family. In terms of processing, covalently binds the prosthetic group of malonate decarboxylase.

Its subcellular location is the cytoplasm. Its function is as follows. Subunit of malonate decarboxylase, it is an acyl carrier protein to which acetyl and malonyl thioester residues are bound via a 2'-(5''-phosphoribosyl)-3'-dephospho-CoA prosthetic group and turn over during the catalytic mechanism. The sequence is that of Malonate decarboxylase acyl carrier protein from Pseudomonas putida (Arthrobacter siderocapsulatus).